Here is a 90-residue protein sequence, read N- to C-terminus: Acylphosphatase (90 aa).

An Acylphosphatase-like domain is found at 4–90; it reads RMYVKVYGIV…KGEFNNFDTY (87 aa). Catalysis depends on residues R19 and N37.

It belongs to the acylphosphatase family.

It catalyses the reaction an acyl phosphate + H2O = a carboxylate + phosphate + H(+). This Sulfurisphaera tokodaii (strain DSM 16993 / JCM 10545 / NBRC 100140 / 7) (Sulfolobus tokodaii) protein is Acylphosphatase (acyP).